The following is a 394-amino-acid chain: NAD(P)H-quinone oxidoreductase subunit H (394 aa).

The protein belongs to the complex I 49 kDa subunit family. As to quaternary structure, NDH-1 can be composed of about 15 different subunits; different subcomplexes with different compositions have been identified which probably have different functions.

Its subcellular location is the cellular thylakoid membrane. The catalysed reaction is a plastoquinone + NADH + (n+1) H(+)(in) = a plastoquinol + NAD(+) + n H(+)(out). It catalyses the reaction a plastoquinone + NADPH + (n+1) H(+)(in) = a plastoquinol + NADP(+) + n H(+)(out). Its function is as follows. NDH-1 shuttles electrons from an unknown electron donor, via FMN and iron-sulfur (Fe-S) centers, to quinones in the respiratory and/or the photosynthetic chain. The immediate electron acceptor for the enzyme in this species is believed to be plastoquinone. Couples the redox reaction to proton translocation, and thus conserves the redox energy in a proton gradient. Cyanobacterial NDH-1 also plays a role in inorganic carbon-concentration. The chain is NAD(P)H-quinone oxidoreductase subunit H from Prochlorococcus marinus (strain SARG / CCMP1375 / SS120).